The sequence spans 902 residues: U3 small nucleolar RNA-associated protein 21 homolog (902 aa).

WD repeat units lie at residues 40–71, 80–110, 119–154, 164–198, 206–243, 249–284, 289–332, 339–373, 399–438, 447–481, 492–528, 533–568, 570–611, and 613–651; these read DIEA…LLFV, TCLK…WDID, THLD…LHTT, TSLL…RVHE, GITS…MEFK, LSCS…QNVT, FGSL…RSRN, SFVK…QSTE, TALS…GQHV, VRSV…KRKS, VTAV…DSLD, ITHA…VREL, GHSN…DSIS, and PSVC…KHVS.

In terms of assembly, interacts with snoRNA U3. Interacts with MPP10. Component of the ribosomal small subunit (SSU) processome composed of at least 40 protein subunits and snoRNA U3.

It localises to the nucleus. It is found in the nucleolus. Functionally, involved in nucleolar processing of pre-18S ribosomal RNA and ribosome assembly. The polypeptide is U3 small nucleolar RNA-associated protein 21 homolog (Schizosaccharomyces pombe (strain 972 / ATCC 24843) (Fission yeast)).